A 2493-amino-acid polypeptide reads, in one-letter code: Polyprotein P1234 (2493 aa).

In terms of domain architecture, Alphavirus-like MT spans 28–259; that stretch reads EAKQVTDNDH…EKRDLLRSWH (232 aa). Residues 244 to 263 are nsP1 membrane-binding; it reads GSTIYHEKRDLLRSWHLPSV. The S-palmitoyl cysteine; by host moiety is linked to residue C419. Residues 690–841 enclose the (+)RNA virus helicase ATP-binding domain; the sequence is ELVDPPFHEF…HEICTQVFHK (152 aa). 721–728 provides a ligand contact to a ribonucleoside 5'-triphosphate; the sequence is GVPGSGKS. Residues 842-990 form the (+)RNA virus helicase C-terminal domain; that stretch reads SISRRCTKSV…IEEWQAEHDA (149 aa). In terms of domain architecture, Peptidase C9 spans 1003–1322; the sequence is DVFQNKANVC…STLTNIYTGS (320 aa). The segment at 1004 to 1023 is nucleolus localization signal; that stretch reads VFQNKANVCWAKALVPVLKT. C1012 serves as the catalytic For cysteine protease nsP2 activity. Residues 1056–1065 carry the Nuclear export signal motif; sequence VRFFGLDLDS. H1081 (for cysteine protease nsP2 activity) is an active-site residue. Residues 1179 to 1183 carry the Nuclear localization signal motif; that stretch reads PGKKV. The Macro domain occupies 1330–1489; sequence APSYHVVRGD…TLKEAVARRE (160 aa). 6 residues coordinate ADP-D-ribose: D1339, N1353, G1361, G1441, I1442, and F1443. The Zn(2+) site is built by C1596, C1598, C1621, and C1639. Disordered regions lie at residues 1664-1684 and 1790-1826; these read PVEE…TPEQ and APRT…STPP. The span at 1814–1823 shows a compositional bias: polar residues; it reads RASSRTSLVS. Repeat copies occupy residues 1818–1839 and 1852–1873. Residues 1818 to 1873 are 2 X 21 AA approximate repeats, binding to host FXR family members; sequence RTSLVSTPPGVNRVITREELEALTPSRAPSRSASRTSLVSNPPGVNRVITREEFEA. Positions 2250–2365 constitute a RdRp catalytic domain; that stretch reads DCVLETDIAS…KGVKSDKLMA (116 aa).

In terms of assembly, interacts with non-structural protein 3. Interacts with RNA-directed RNA polymerase nsP4. Interacts with protease nsP2. interacts with itself. Interacts with mRNA-capping enzyme nsP1. Interacts with host DDX1. Interacts with host DDX3. Interacts (via C-terminus) with host FXR1; this interaction inhibits the formation of host stress granules on viral mRNAs and the nsp3-FXR1 complexes bind viral RNAs and probably orchestrate the assembly of viral replication complexes. Interacts (via C-terminus) with host FXR2; this interaction inhibits the formation of host stress granules on viral mRNAs and the nsp3-FXR2 complexes bind viral RNAs and probably orchestrate the assembly of viral replication complexes. Interacts (via C-terminus) with host FMR1; this interaction inhibits the formation of host stress granules on viral mRNAs and the nsp3-FMR1 complexes bind viral RNAs and probably orchestrate the assembly of viral replication complexes. As to quaternary structure, interacts with mRNA-capping enzyme nsP1. Interacts with protease nsP2. interacts with itself. In terms of assembly, interacts with RNA-directed RNA polymerase nsP4. Interacts with mRNA-capping enzyme nsP1. Interacts with KPNA1/karyopherin-alpha1; this interaction probably allows the active transport of protease nsP2 into the host nucleus. The cofactor is Mg(2+). It depends on Mn(2+) as a cofactor. In terms of processing, specific enzymatic cleavages in vivo yield mature proteins. The processing of the polyprotein is temporally regulated. In early stages (1.7 hpi), P1234 is first cleaved in trans through its nsP2 protease activity, releasing P123' and nsP4, which associate to form the early replication complex. At the same time, P1234 is also cut at the nsP1/nsP2 site early in infection but with lower efficiency. After replication of the viral minus-strand RNAs (4 hpi), the polyproteins are cut at the nsP1/nsP2 and nsP2/nsP3 sites very efficiently, preventing accumulation of P123' and P1234 and allowing the formation of the late replication complex. NsP3'/nsP4 site is not cleaved anymore and P34 is produced rather than nsP4. Post-translationally, specific enzymatic cleavages in vivo yield mature proteins. The processing of the polyprotein is temporally regulated. In early stages (1.7 hpi), P123 is cleaved at the nsP1/nsP2 site with low efficiency. After replication of the viral minus-strand RNAs (4 hpi), the polyproteins are cut at the nsP1/nsP2 and nsP2/nsP3 sites very efficiently, preventing accumulation of P123 and allowing the formation of the late replication complex. Specific enzymatic cleavages in vivo yield mature proteins. The processing of the polyprotein is temporally regulated. In early stages (1.7 hpi), P123' is cleaved at the nsP1/nsP2 site with low efficiency. After replication of the viral minus-strand RNAs (4 hpi), the polyproteins are cut at the nsP1/nsP2 and nsP2/nsP3 sites very efficiently, preventing accumulation of P123' and allowing the formation of the late replication complex. In terms of processing, palmitoylated by host palmitoyltransferases ZDHHC2 and ZDHHC19. Post-translationally, phosphorylated by host on serines and threonines. Ubiquitinated; targets the protein for rapid degradation via the ubiquitin system. Nsp4 is present in extremely low quantities due to low frequency of translation through the amber stop-codon and the degradation by the ubiquitin pathway.

It localises to the host cytoplasmic vesicle membrane. The protein localises to the host cell membrane. The protein resides in the host cell projection. Its subcellular location is the host filopodium. It is found in the host nucleus. It localises to the host cytoplasm. It catalyses the reaction GTP + S-adenosyl-L-methionine = N(7)-methyl-GTP + S-adenosyl-L-homocysteine. The enzyme catalyses N(7)-methyl-GTP + L-histidyl-[protein] = N(tele)-(N(7)-methylguanosine 5'-phospho)-L-histidyl-[protein] + diphosphate. The catalysed reaction is N(tele)-(N(7)-methylguanosine 5'-phospho)-L-histidyl-[protein] + a 5'-end diphospho-(purine-ribonucleoside) in mRNA + H(+) = a 5'-end (N(7)-methyl 5'-triphosphoguanosine)-(purine-ribonucleoside) in mRNA + L-histidyl-[protein]. It carries out the reaction a 5'-end triphospho-ribonucleoside in mRNA + H2O = a 5'-end diphospho-ribonucleoside in mRNA + phosphate + H(+). It catalyses the reaction a ribonucleoside 5'-triphosphate + H2O = a ribonucleoside 5'-diphosphate + phosphate + H(+). The enzyme catalyses ATP + H2O = ADP + phosphate + H(+). The catalysed reaction is RNA(n) + a ribonucleoside 5'-triphosphate = RNA(n+1) + diphosphate. It carries out the reaction 4-O-(ADP-D-ribosyl)-L-aspartyl-[protein] + H2O = L-aspartyl-[protein] + ADP-D-ribose + H(+). It catalyses the reaction 5-O-(ADP-D-ribosyl)-L-glutamyl-[protein] + H2O = L-glutamyl-[protein] + ADP-D-ribose + H(+). The enzyme catalyses RNA(n) + ATP = RNA(n)-3'-adenine ribonucleotide + diphosphate. The catalysed reaction is ADP-alpha-D-ribose 1''-phosphate + H2O = ADP-D-ribose + phosphate. Its activity is regulated as follows. Inhibited by sinefungin. In terms of biological role, inactive precursor of the viral replicase, which is activated by cleavages carried out by the viral protease nsP2. Its function is as follows. The early replication complex formed by the polyprotein P123 and nsP4 synthesizes the minus-strand RNAs (antigenome). Polyprotein P123 is a short-lived polyprotein that accumulates during early stage of infection. As soon P123 is cleaved into mature proteins, the plus-strand RNAs synthesis begins. Functionally, the early replication complex formed by the polyprotein P123' and nsP4 synthesizes minus-strand RNAs (antigenome). Polyprotein P123' is a short-lived polyprotein that accumulates during early stage of infection. As soon P123' is cleaved into mature proteins, the plus-strand RNAs synthesis begins. Cytoplasmic capping enzyme that catalyzes two virus-specific reactions: methyltransferase and nsP1 guanylyltransferase. mRNA-capping is necessary since all viral RNAs are synthesized in the cytoplasm, and host capping enzymes are restricted to the nucleus. The enzymatic reaction involves a covalent link between 7-methyl-GMP and nsP1, whereas eukaryotic capping enzymes form a covalent complex only with GMP. NsP1 capping consists in the following reactions: GTP is first methylated into 7-methyl-GMP and then is covalently linked to nsP1 to form the m7GMp-nsP1 complex from which 7-methyl-GMP complex is transferred to the mRNA to create the cap structure. NsP1 is also needed for the initiation of the minus-strand RNAs synthesis. Probably serves as a membrane anchor for the replication complex composed of nsP1-nsP4. Nsp1 is needed for the initiation of the minus-strand RNAs synthesis. Palmitoylated nsP1 is remodeling host cell cytoskeleton, and induces filopodium-like structure formation at the surface of the host cell. In terms of biological role, multifunctional protein whose N-terminus is part of the RNA polymerase complex and displays NTPase, RNA triphosphatase and helicase activities. NTPase and RNA triphosphatase are involved in viral RNA capping and helicase keeps a check on the dsRNA replication intermediates. The C-terminus harbors a protease that specifically cleaves the polyproteins and releases the mature proteins. Required for the shutoff of minus-strand RNAs synthesis. Inhibits host translation to ensure maximal viral gene expression and evade host immune response. Its function is as follows. Seems to be essential for minus-strand RNAs and subgenomic 26S mRNAs synthesis. Displays mono-ADP-ribosylhydrolase activity. ADP-ribosylation is a post-translational modification that controls various processes of the host cell and the virus probably needs to revert it for optimal viral replication. Binds proteins of FXR family and sequesters them into the viral RNA replication complexes thereby inhibiting the formation of host stress granules on viral mRNAs. The nsp3-FXR complexes bind viral RNAs and probably orchestrate the assembly of viral replication complexes, thanks to the ability of FXR family members to self-assemble and bind DNA. Functionally, seems to be essential for minus-strand RNAs and subgenomic 26S mRNAs synthesis. Displays mono-ADP-ribosylhydrolase activity. ADP-ribosylation is a post-translational modification that controls various processes of the host cell and the virus probably needs to revert it for optimal viral replication. Binds proteins of FXR family and sequesters them into the viral RNA replication complexes thereby inhibiting the formation of host stress granules on viral mRNAs. The nsp3'-FXR complexes bind viral RNAs and probably orchestrate the assembly of viral replication complexes, thanks to the ability of FXR family members to self-assemble and bind DNA. RNA dependent RNA polymerase. Replicates genomic and antigenomic RNA by recognizing replications specific signals. The early replication complex formed by the polyprotein P123 and nsP4 synthesizes minus-strand RNAs. The late replication complex composed of fully processed nsP1-nsP4 is responsible for the production of genomic and subgenomic plus-strand RNAs. This Bos taurus (Bovine) protein is Polyprotein P1234.